Consider the following 246-residue polypeptide: Ribosomal RNA small subunit methyltransferase J (246 aa).

Residues 115-116 and D169 contribute to the S-adenosyl-L-methionine site; that span reads ER.

The protein belongs to the methyltransferase superfamily. RsmJ family.

It is found in the cytoplasm. The enzyme catalyses guanosine(1516) in 16S rRNA + S-adenosyl-L-methionine = N(2)-methylguanosine(1516) in 16S rRNA + S-adenosyl-L-homocysteine + H(+). In terms of biological role, specifically methylates the guanosine in position 1516 of 16S rRNA. The sequence is that of Ribosomal RNA small subunit methyltransferase J from Buchnera aphidicola subsp. Acyrthosiphon pisum (strain Tuc7).